The chain runs to 435 residues: MDTIFAVSSGLLPSGVAVIRLSGPHVVHIVKTLCGCLPKARFMHYGNLIARDGSFLDSALTVFFPAPHSFTGEDCAEFHLHGGKAVVNRFLDELSTFSGCRIAEAGEFSRRAFMEGKLDLVQAEGLADLIEAETESQRRLAVMGTSGHLTTLYRDWRHKLMKVRAFIEAELDFADEEDIPDTISDKIWKDVEDLCTSLREHIREGERASILRDGLKIVIAGAPNSGKSSIMNRLAGRSVAIVTEEAGTTRDALEMRLVLGGLPIFLTDTAGFRKTENKIEQLGIEVAKQHVREADLVILVYDIVNPKQVDLPETSAEIWRVGNKLDLYEKNDPCWSIQFSALTGLNFDCFIKKLESFCHRRASEVGNLVPARKRQLQLLKEAVKEIENSLNYHSLDLSLRAEHLRRASDFLGKITGDIDVEDLLDIIFSEFCVGK.

The (6S)-5-formyl-5,6,7,8-tetrahydrofolate site is built by arginine 20, glutamate 77, and lysine 117. In terms of domain architecture, TrmE-type G spans 214–359; the sequence is GLKIVIAGAP…FIKKLESFCH (146 aa). GTP-binding positions include 224–229, 243–249, and 268–271; these read NSGKSS, TEEAGTT, and DTAG. Positions 228 and 249 each coordinate Mg(2+). Lysine 435 contributes to the (6S)-5-formyl-5,6,7,8-tetrahydrofolate binding site.

Belongs to the TRAFAC class TrmE-Era-EngA-EngB-Septin-like GTPase superfamily. TrmE GTPase family. As to quaternary structure, homodimer. Heterotetramer of two MnmE and two MnmG subunits. K(+) is required as a cofactor.

The protein resides in the cytoplasm. Exhibits a very high intrinsic GTPase hydrolysis rate. Involved in the addition of a carboxymethylaminomethyl (cmnm) group at the wobble position (U34) of certain tRNAs, forming tRNA-cmnm(5)s(2)U34. The chain is tRNA modification GTPase MnmE from Bartonella tribocorum (strain CIP 105476 / IBS 506).